The primary structure comprises 423 residues: Zinc finger protein Gfi-1 (423 aa).

An SNAG domain region spans residues Met-1–Ser-20. The tract at residues Met-1 to Ser-102 is disordered. A phosphoserine mark is found at Ser-20 and Ser-57. Positions Ser-48–Ser-57 are enriched in basic and acidic residues. Positions Arg-141–Cys-258 are required for interaction with RELA. 6 consecutive C2H2-type zinc fingers follow at residues Tyr-256–His-279, Phe-285–His-307, Phe-313–His-335, Tyr-341–His-363, His-369–His-391, and Phe-397–His-420.

Interacts with U2AF1L4. Component of RCOR-GFI-KDM1A-HDAC complexes. Interacts directly with RCOR1, KDM1A and HDAC2. Also interacts with HDAC1. regions. Interacts (via the zinc-finger domain) with ARIH2; the interaction prevents GFI1 ubiquitination and proteasomal degradation. Interacts with PIAS3; the interaction relieves the inhibitory effect of PIAS3 on STAT3-mediated transcriptional activity. Forms a complex with EHMT2 and HDAC1 to promote 'Lys-9' dimethylation of H3 (H3K9Me2) and repress expression of target genes. Interacts directly with EHMT2. Component of the GFI1-AJUBA-HDAC1 repressor complex. Interacts directly with AJUBA (via ITS LIM domains); the interaction results in the HDAC-dependent corepression of a subset of GFI1 target genes and, occurs independent of the SNAG domain. Interacts with SPI1; the interaction inhibits SPI1 transcriptional activity targeted at macrophage-specific genes, repressing macrophage differentiation of myeloid progenitor cells and promoting granulocyte commitment. Interacts with RUNX1T1; the interaction represses HDAC-mediated transcriptional activity. Interacts with RELA; the interaction occurs on liposaccharide (LPS) stimulation controls RELA DNA binding activity and regulates endotoxin-mediated TOLL-like receptor inflammatory response. Interacts (via the C-terminal zinc fingers) with ZBTB17; the interaction results in the recruitment of GFI1 to the CDKN1A/p21 promoter and repression of CDKN1A/p21 transcription. Post-translationally, ubiquitinated. In terms of tissue distribution, restricted to lymphoid tissues and testes in adult animals.

Its subcellular location is the nucleus. Functionally, transcription repressor essential for hematopoiesis. Functions in a cell-context and development-specific manner. Binds to 5'-TAAATCAC[AT]GCA-3' in the promoter region of a large number of genes. Component of several complexes, including the EHMT2-GFI1-HDAC1, AJUBA-GFI1-HDAC1 and RCOR-GFI-KDM1A-HDAC complexes, that suppress, via histone deacetylase (HDAC) recruitment, a number of genes implicated in multilineage blood cell development. Regulates neutrophil differentiation, promotes proliferation of lymphoid cells, and is required for granulocyte development. Inhibits SPI1 transcriptional activity at macrophage-specific genes, repressing macrophage differentiation of myeloid progenitor cells and promoting granulocyte commitment. Mediates, together with U2AF1L4, the alternative splicing of CD45 and controls T-cell receptor signaling. Regulates the endotoxin-mediated Toll-like receptor (TLR) inflammatory response by antagonizing RELA. Cooperates with CBFA2T2 to regulate ITGB1-dependent neurite growth. Controls cell-cycle progression by repressing CDKNIA/p21 transcription in response to TGFB1 via recruitment of GFI1 by ZBTB17 to the CDKNIA/p21 and CDKNIB promoters. Required for the maintenance of inner ear hair cells. In addition to its role in transcription, acts as a substrate adapter for PRMT1 in the DNA damage response: facilitates the recognition of TP53BP1 and MRE11 substrates by PRMT1, promoting their methylation and the DNA damage response. The polypeptide is Zinc finger protein Gfi-1 (Gfi1) (Rattus norvegicus (Rat)).